Reading from the N-terminus, the 153-residue chain is Putative trans-acting regulator pXO2-62/BXB0076/GBAA_pXO2_0076 (153 aa).

It belongs to the AtxA/AcpA family.

The sequence is that of Putative trans-acting regulator pXO2-62/BXB0076/GBAA_pXO2_0076 from Bacillus anthracis.